Here is a 130-residue protein sequence, read N- to C-terminus: Cystatin (130 aa).

An N-terminal signal peptide occupies residues 1-19; the sequence is MEWKIVVPLLAVAFTVANA. Positions 67–71 match the Secondary area of contact motif; the sequence is QVVSG. Disulfide bonds link cysteine 85-cysteine 94 and cysteine 108-cysteine 128.

Belongs to the cystatin family. Ubiquitous expression including brain, white muscle, heart, gill, kidney, spleen, liver and skin with the highest and lowest level in brain and gill, respectively.

Its subcellular location is the secreted. In terms of biological role, cysteine proteinase inhibitor. This is Cystatin from Oncorhynchus keta (Chum salmon).